We begin with the raw amino-acid sequence, 473 residues long: ATP synthase subunit beta (473 aa).

156–163 serves as a coordination point for ATP; that stretch reads GGAGVGKT.

This sequence belongs to the ATPase alpha/beta chains family. In terms of assembly, F-type ATPases have 2 components, CF(1) - the catalytic core - and CF(0) - the membrane proton channel. CF(1) has five subunits: alpha(3), beta(3), gamma(1), delta(1), epsilon(1). CF(0) has three main subunits: a(1), b(2) and c(9-12). The alpha and beta chains form an alternating ring which encloses part of the gamma chain. CF(1) is attached to CF(0) by a central stalk formed by the gamma and epsilon chains, while a peripheral stalk is formed by the delta and b chains.

It is found in the cell inner membrane. The catalysed reaction is ATP + H2O + 4 H(+)(in) = ADP + phosphate + 5 H(+)(out). In terms of biological role, produces ATP from ADP in the presence of a proton gradient across the membrane. The catalytic sites are hosted primarily by the beta subunits. The polypeptide is ATP synthase subunit beta (Desulfovibrio desulfuricans (strain ATCC 27774 / DSM 6949 / MB)).